Reading from the N-terminus, the 176-residue chain is Probable inosine/xanthosine triphosphatase (176 aa).

Asp36 contributes to the Mg(2+) binding site.

Belongs to the YjjX NTPase family. As to quaternary structure, homodimer. Requires Mg(2+) as cofactor. It depends on Mn(2+) as a cofactor.

The enzyme catalyses XTP + H2O = XDP + phosphate + H(+). It carries out the reaction ITP + H2O = IDP + phosphate + H(+). Functionally, phosphatase that hydrolyzes non-canonical purine nucleotides such as XTP and ITP to their respective diphosphate derivatives. Probably excludes non-canonical purines from DNA/RNA precursor pool, thus preventing their incorporation into DNA/RNA and avoiding chromosomal lesions. In Saccharolobus islandicus (strain Y.G.57.14 / Yellowstone #1) (Sulfolobus islandicus), this protein is Probable inosine/xanthosine triphosphatase.